The following is a 512-amino-acid chain: ATP synthase subunit alpha (512 aa).

Residue 169-176 (GDRKTGKT) coordinates ATP.

It belongs to the ATPase alpha/beta chains family. In terms of assembly, F-type ATPases have 2 components, CF(1) - the catalytic core - and CF(0) - the membrane proton channel. CF(1) has five subunits: alpha(3), beta(3), gamma(1), delta(1), epsilon(1). CF(0) has three main subunits: a(1), b(2) and c(9-12). The alpha and beta chains form an alternating ring which encloses part of the gamma chain. CF(1) is attached to CF(0) by a central stalk formed by the gamma and epsilon chains, while a peripheral stalk is formed by the delta and b chains.

Its subcellular location is the cell membrane. The catalysed reaction is ATP + H2O + 4 H(+)(in) = ADP + phosphate + 5 H(+)(out). In terms of biological role, produces ATP from ADP in the presence of a proton gradient across the membrane. The alpha chain is a regulatory subunit. The polypeptide is ATP synthase subunit alpha (Limosilactobacillus fermentum (strain NBRC 3956 / LMG 18251) (Lactobacillus fermentum)).